The sequence spans 758 residues: Polyribonucleotide nucleotidyltransferase (758 aa).

2 residues coordinate Mg(2+): aspartate 482 and aspartate 488. Residues 549 to 608 enclose the KH domain; the sequence is PRVLSFYIDKDKISAAIGTKGKNIRSVCERSNAKIEIGDDGKVSVFAISSTEAEAAKNMM. The 69-residue stretch at 618–686 folds into the S1 motif domain; sequence GSIIDAKVVK…KGGCPKLSRR (69 aa). The interval 707–758 is disordered; that stretch reads DGLNNRDNYYNNSFNKKPEDNYHSNRPTRPRSGFSNRSRPKFGNNDSSSGFY. Low complexity predominate over residues 711-721; sequence NRDNYYNNSFN.

The protein belongs to the polyribonucleotide nucleotidyltransferase family. It depends on Mg(2+) as a cofactor.

Its subcellular location is the cytoplasm. It catalyses the reaction RNA(n+1) + phosphate = RNA(n) + a ribonucleoside 5'-diphosphate. In terms of biological role, involved in mRNA degradation. Catalyzes the phosphorolysis of single-stranded polyribonucleotides processively in the 3'- to 5'-direction. The protein is Polyribonucleotide nucleotidyltransferase of Wolbachia pipientis subsp. Culex pipiens (strain wPip).